The primary structure comprises 317 residues: Heme A synthase (317 aa).

Over 1-6 (MQRSLK) the chain is Cytoplasmic. A helical membrane pass occupies residues 7–27 (WFASTTTVAMLFVLIGGALVT). The Extracellular portion of the chain corresponds to 28–54 (KTDSGMGCGRSWPLCHGQWIPDDITPQ). A disulfide bridge links cysteine 35 with cysteine 42. The chain crosses the membrane as a helical span at residues 55–75 (LVIELSHRLVSGLAAIMVLIL). Glutamate 58 is a catalytic residue. Histidine 61 contributes to the heme o binding site. Over 76–91 (CIRSWRVMGHVRETKP) the chain is Cytoplasmic. The helical transmembrane segment at 92–112 (LAVLSFVFLVLQSLIGAAAVV) threads the bilayer. Topologically, residues 113 to 123 (WGQSDFVMALH) are extracellular. Histidine 123 lines the heme o pocket. A helical membrane pass occupies residues 124-144 (FGISLISFAAVLLLTLLIFVV). The Cytoplasmic segment spans residues 145–159 (DKKFSPTSLQLDGQM). A helical membrane pass occupies residues 160–180 (RFHIYGIIIYSYLVVYTGALV). The Extracellular portion of the chain corresponds to 181–214 (RHTNASLACPSWPLCAKSRLLPVQFHEWVQMGHR). Residues cysteine 189 and cysteine 195 are joined by a disulfide bond. A heme b-binding site is contributed by histidine 213. The helical transmembrane segment at 215–235 (LAAAVIIIWIAVATVHAARYY) threads the bilayer. Residues 236–243 (REQPVIYY) are Cytoplasmic-facing. The chain crosses the membrane as a helical span at residues 244-264 (GWIISLLLVLAQMVTGALVVF). Residues 265–272 (TELNLYIS) are Extracellular-facing. Residues 273–293 (LAHAFFISCLFGVLSYLLLLA) form a helical membrane-spanning segment. Histidine 275 contributes to the heme b binding site. The Cytoplasmic segment spans residues 294 to 317 (LRTRRRPATAAGRSVEDTASAPLK).

This sequence belongs to the COX15/CtaA family. Type 1 subfamily. As to quaternary structure, interacts with CtaB. Requires heme b as cofactor.

The protein resides in the cell membrane. It carries out the reaction Fe(II)-heme o + 2 A + H2O = Fe(II)-heme a + 2 AH2. The protein operates within porphyrin-containing compound metabolism; heme A biosynthesis; heme A from heme O: step 1/1. In terms of biological role, catalyzes the conversion of heme O to heme A by two successive hydroxylations of the methyl group at C8. The first hydroxylation forms heme I, the second hydroxylation results in an unstable dihydroxymethyl group, which spontaneously dehydrates, resulting in the formyl group of heme A. In Geobacillus thermodenitrificans, this protein is Heme A synthase.